Here is a 367-residue protein sequence, read N- to C-terminus: Methylthioribose-1-phosphate isomerase (367 aa).

Substrate contacts are provided by residues Arg54–Ala56, Arg91, and Gln201. Asp242 serves as the catalytic Proton donor. Asn252–Lys253 contacts substrate.

This sequence belongs to the eIF-2B alpha/beta/delta subunits family. MtnA subfamily.

It carries out the reaction 5-(methylsulfanyl)-alpha-D-ribose 1-phosphate = 5-(methylsulfanyl)-D-ribulose 1-phosphate. The protein operates within amino-acid biosynthesis; L-methionine biosynthesis via salvage pathway; L-methionine from S-methyl-5-thio-alpha-D-ribose 1-phosphate: step 1/6. Functionally, catalyzes the interconversion of methylthioribose-1-phosphate (MTR-1-P) into methylthioribulose-1-phosphate (MTRu-1-P). This Acidiphilium cryptum (strain JF-5) protein is Methylthioribose-1-phosphate isomerase.